The primary structure comprises 199 residues: MKFKRDENQNSTHHRGNKNNTNNDDDDKEEEEEIINDTTMPPLNNEEKYFLKKIFPFLPSRSSSSTSKLIFSLILDLVGFFTQIIPIFGFAFWPSISTYLIFKVYGSGLHLCVSFLEETIPGLGFIPTATCCWANEKYNIIPKVDRYLPTRYIKMVRNFISAFKKIAIAVALIAIYKIISYFSPYLPFFGGSKNHQTSY.

Residues 1–41 (MKFKRDENQNSTHHRGNKNNTNNDDDDKEEEEEIINDTTMP) form a disordered region. Positions 23–35 (NDDDDKEEEEEII) are enriched in acidic residues. Helical transmembrane passes span 73–93 (LILD…FAFW), 96–116 (ISTY…VSFL), and 166–186 (IAIA…SPYL).

It localises to the membrane. This is an uncharacterized protein from Dictyostelium discoideum (Social amoeba).